Reading from the N-terminus, the 1210-residue chain is Epidermal growth factor receptor (1210 aa).

Positions Met-1–Ala-24 are cleaved as a signal peptide. At Leu-25 to Ser-647 the chain is on the extracellular side. A disulfide bridge links Cys-31 with Cys-58. The Approximate repeat unit spans residues Asp-75–Val-300. N-linked (GlcNAc...) asparagine glycosylation is found at Asn-128, Asn-175, and Asn-196. 13 cysteine pairs are disulfide-bonded: Cys-157–Cys-187, Cys-190–Cys-199, Cys-194–Cys-207, Cys-215–Cys-223, Cys-219–Cys-231, Cys-232–Cys-240, Cys-236–Cys-248, Cys-251–Cys-260, Cys-264–Cys-291, Cys-295–Cys-307, Cys-311–Cys-326, Cys-329–Cys-333, and Cys-337–Cys-362. At Ser-229 the chain carries Phosphoserine. Residues Asn-352, Asn-413, and Asn-444 are each glycosylated (N-linked (GlcNAc...) asparagine). Residues Arg-390–Met-600 form an Approximate repeat. Cystine bridges form between Cys-470-Cys-499, Cys-506-Cys-515, Cys-510-Cys-523, Cys-526-Cys-535, Cys-539-Cys-555, Cys-558-Cys-571, Cys-562-Cys-579, Cys-582-Cys-591, Cys-595-Cys-617, Cys-620-Cys-628, and Cys-624-Cys-636. N-linked (GlcNAc...) asparagine glycosylation is present at Asn-528. N-linked (GlcNAc...) asparagine glycosylation is present at Asn-568. Asn-603 and Asn-623 each carry an N-linked (GlcNAc...) asparagine glycan. The chain crosses the membrane as a helical span at residues Ile-648–Met-670. Topologically, residues Arg-671–Ala-1210 are cytoplasmic. Thr-680 carries the post-translational modification Phosphothreonine; by PKC and PKD/PRKD1. The interval Leu-690–Leu-706 is important for dimerization, phosphorylation and activation. Thr-695 is modified (phosphothreonine; by PKD/PRKD1). The residue at position 697 (Ser-697) is a Phosphoserine. Positions Phe-714 to Leu-981 constitute a Protein kinase domain. A Glycyl lysine isopeptide (Lys-Gly) (interchain with G-Cter in ubiquitin) cross-link involves residue Lys-718. Leu-720–Val-728 is an ATP binding site. Residue Lys-739 forms a Glycyl lysine isopeptide (Lys-Gly) (interchain with G-Cter in ubiquitin) linkage. Lys-747 provides a ligand contact to ATP. Lys-747 is modified (N6-(2-hydroxyisobutyryl)lysine). Residues Lys-756 and Lys-759 each participate in a glycyl lysine isopeptide (Lys-Gly) (interchain with G-Cter in ubiquitin) cross-link. Position 792–793 (Thr-792–Gln-793) interacts with ATP. Catalysis depends on Asp-839, which acts as the Proton acceptor. Asp-857 serves as a coordination point for ATP. Lys-869 is covalently cross-linked (Glycyl lysine isopeptide (Lys-Gly) (interchain with G-Cter in ubiquitin)). Phosphotyrosine is present on Tyr-871. Glycyl lysine isopeptide (Lys-Gly) (interchain with G-Cter in ubiquitin) cross-links involve residues Lys-931, Lys-962, and Lys-972. Phosphoserine is present on residues Ser-993 and Ser-997. A phosphotyrosine; by autocatalysis mark is found at Tyr-1000 and Tyr-1018. Ser-1028 and Ser-1041 each carry phosphoserine. Thr-1043 is subject to Phosphothreonine. Ser-1044 carries the post-translational modification Phosphoserine. Cys-1051 is lipidated: S-palmitoyl cysteine. Tyr-1069 carries the phosphotyrosine modification. A phosphoserine mark is found at Ser-1070 and Ser-1071. Phosphotyrosine; by autocatalysis is present on residues Tyr-1092 and Tyr-1110. Residues Gln-1113–Glu-1137 form a disordered region. A compositionally biased stretch (polar residues) spans Asn-1127–Glu-1137. Cys-1146 is lipidated: S-palmitoyl cysteine. At Ser-1166 the chain carries Phosphoserine. Residue Tyr-1172 is modified to Phosphotyrosine; by autocatalysis. Residue Tyr-1197 is modified to Phosphotyrosine. Omega-N-methylarginine is present on Arg-1199.

This sequence belongs to the protein kinase superfamily. Tyr protein kinase family. EGF receptor subfamily. Binding of the ligand triggers homo- and/or heterodimerization of the receptor triggering its autophosphorylation. Heterodimer with ERBB2. Forms a complex with CCDC88A/GIV (via SH2-like region) and GNAI3 which leads to enhanced EGFR signaling and triggering of cell migration; binding of CCDC88A requires autophosphorylation of the EGFR C-terminal region, and ligand stimulation is required for recruitment of GNAI3 to the complex. Interacts with ERRFI1; inhibits dimerization of the kinase domain and autophosphorylation. Part of a complex with ERBB2 and either PIK3C2A or PIK3C2B. Interacts with GRB2; an adapter protein coupling the receptor to downstream signaling pathways. Interacts with GAB2; involved in signaling downstream of EGFR. Interacts with STAT3; mediates EGFR downstream signaling in cell proliferation. Interacts with RIPK1; involved in NF-kappa-B activation. Interacts (autophosphorylated) with CBL, CBLB and CBLC; involved in EGFR ubiquitination and regulation; interaction with CBL is reduced in the presence of tensin TNS4. Interacts with SOCS5; regulates EGFR degradation through ELOC- and ELOB-mediated ubiquitination and proteasomal degradation. Interacts with PRMT5; methylates EGFR and enhances interaction with PTPN6. Interacts (phosphorylated) with PTPN6; inhibits EGFR-dependent activation of MAPK/ERK. Interacts with COPG1; essential for regulation of EGF-dependent nuclear transport of EGFR by retrograde trafficking from the Golgi to the ER. Interacts with TNK2; this interaction is dependent on EGF stimulation and kinase activity of EGFR. Interacts with PCNA; positively regulates PCNA. Interacts with PELP1. Interacts with MUC1. Interacts with AP2M1. Interacts with FER. Interacts (via SH2 domains) with GRB2, NCK1 and NCK2. Interacts with EPS8; mediates EPS8 phosphorylation. Interacts with ATXN2. Interacts with GAREM1. Interacts (ubiquitinated) with ANKRD13A/B/D; the interaction is direct and may regulate EGFR internalization after EGF stimulation. Interacts with GPER1; the interaction occurs in an estrogen-dependent manner. Interacts (via C-terminal cytoplasmic kinase domain) with ZPR1 (via zinc fingers). Interacts with RNF115 and RNF126. Interacts with GPRC5A (via its transmembrane domain). Interacts with FAM83B; positively regulates EGFR inducing its autophosphorylation in absence of stimulation by EGF. Interacts with LAPTM4B; positively correlates with EGFR activation. Interacts with STX19. Interacts with CD44. Interacts with PGRMC1; the interaction requires PGRMC1 homodimerization. Interacts with PIKFYVE. Interacts with NEU3. Interacts with TRAF4. Interacts with the ant venom OMEGA-myrmeciitoxin(02)-Mg1a. Interacts with CD82; this interaction facilitates ligand-induced endocytosis of the receptor and its subsequent desensitization. In terms of processing, monoubiquitinated and polyubiquitinated upon EGF stimulation; which does not affect tyrosine kinase activity or signaling capacity but may play a role in lysosomal targeting. Polyubiquitin linkage is mainly through 'Lys-63', but linkage through 'Lys-48', 'Lys-11' and 'Lys-29' also occurs. Deubiquitinated by OTUD7B, preventing degradation. Ubiquitinated by RNF115 and RNF126. Ubiquitinated by ZNRF1 or CBL at different lysines in response to EGF stimulation; leading to recruitment of the ESCRT machinery and subsequent degradation in the lysosomes. Deubiquitinated by UCHL1 leading to the inhibition of its degradation. Phosphorylated on Tyr residues in response to EGF. Phosphorylation at Ser-697 is partial and occurs only if Thr-695 is phosphorylated. Phosphorylation at Thr-680 and Thr-695 by PRKD1 inhibits EGF-induced MAPK8/JNK1 activation. Dephosphorylation by PTPRJ prevents endocytosis and stabilizes the receptor at the plasma membrane. Autophosphorylation at Tyr-1199 is stimulated by methylation at Arg-1199 and enhances interaction with PTPN6. Autophosphorylation at Tyr-1092 and/or Tyr-1110 recruits STAT3. Dephosphorylated by PTPN1 and PTPN2. Post-translationally, palmitoylated on Cys residues by ZDHHC20. Palmitoylation inhibits internalization after ligand binding, and increases the persistence of tyrosine-phosphorylated EGFR at the cell membrane. Palmitoylation increases the amplitude and duration of EGFR signaling. In terms of processing, methylated. Methylation at Arg-1199 by PRMT5 stimulates phosphorylation at Tyr-1197.

The protein resides in the cell membrane. It is found in the endoplasmic reticulum membrane. It localises to the golgi apparatus membrane. Its subcellular location is the nucleus membrane. The protein localises to the endosome. The protein resides in the endosome membrane. It is found in the nucleus. The catalysed reaction is L-tyrosyl-[protein] + ATP = O-phospho-L-tyrosyl-[protein] + ADP + H(+). Endocytosis and inhibition of the activated EGFR by phosphatases like PTPRJ and PTPRK constitute immediate regulatory mechanisms. Upon EGF-binding phosphorylates EPS15 that regulates EGFR endocytosis and activity. Moreover, inducible feedback inhibitors including LRIG1, SOCS4, SOCS5 and ERRFI1 constitute alternative regulatory mechanisms for the EGFR signaling. Its function is as follows. Receptor tyrosine kinase binding ligands of the EGF family and activating several signaling cascades to convert extracellular cues into appropriate cellular responses. Known ligands include EGF, TGFA/TGF-alpha, AREG, epigen/EPGN, BTC/betacellulin, epiregulin/EREG and HBEGF/heparin-binding EGF. Ligand binding triggers receptor homo- and/or heterodimerization and autophosphorylation on key cytoplasmic residues. The phosphorylated receptor recruits adapter proteins like GRB2 which in turn activates complex downstream signaling cascades. Activates at least 4 major downstream signaling cascades including the RAS-RAF-MEK-ERK, PI3 kinase-AKT, PLCgamma-PKC and STATs modules. May also activate the NF-kappa-B signaling cascade. Also directly phosphorylates other proteins like RGS16, activating its GTPase activity and probably coupling the EGF receptor signaling to the G protein-coupled receptor signaling. Also phosphorylates MUC1 and increases its interaction with SRC and CTNNB1/beta-catenin. Positively regulates cell migration via interaction with CCDC88A/GIV which retains EGFR at the cell membrane following ligand stimulation, promoting EGFR signaling which triggers cell migration. Plays a role in enhancing learning and memory performance. Plays a role in mammalian pain signaling (long-lasting hypersensitivity). This Mus musculus (Mouse) protein is Epidermal growth factor receptor.